Reading from the N-terminus, the 150-residue chain is HTH-type transcriptional regulator LrpA (150 aa).

The HTH asnC-type domain maps to 5-66 (LDDIDRILVR…RINPEAVGHL (62 aa)). Residues 24 to 43 (LSELATRAGLSVSAVQSRVR) constitute a DNA-binding region (H-T-H motif). The L-phenylalanine site is built by Val100, Gly102, and Glu104.

Homohexadecamer in the absence of any added ligand. Homooctamer. Tetramer of dimers. In the presence of phenylalanine, the hexadecamer dissociates into an octamer, which further dissociates partially into lower-order oligomers.

Its activity is regulated as follows. The DNA-binding activity of LrpA is modulated by interaction of LrpA with various effector molecules, including amino acids and vitamins. The DNA binding affinity is decreased by several amino acids, including phenylalanine, tyrosine, tryptophan, histidine, leucine and aspartate. Preferentially binds to aromatic amino acids. Besides amino acids, the binding affinity is also reduced by vitamins, including B1, B3, B6, VC, B7, B9, B12, VA and VK3. Its function is as follows. Transcriptional regulator that probably plays an important role in M.tuberculosis persistence. Regulates the expression of several genes, including lat, rsmG, whiB2, lsr2 and Rv2011c. Acts by binding directly to the promoter region of the target genes. The polypeptide is HTH-type transcriptional regulator LrpA (Mycobacterium tuberculosis (strain ATCC 25618 / H37Rv)).